The sequence spans 38 residues: Large ribosomal subunit protein bL12 (38 aa).

This sequence belongs to the bacterial ribosomal protein bL12 family. In terms of assembly, homodimer. Part of the ribosomal stalk of the 50S ribosomal subunit. Forms a multimeric L10(L12)X complex, where L10 forms an elongated spine to which 2 to 4 L12 dimers bind in a sequential fashion. Binds GTP-bound translation factors.

In terms of biological role, forms part of the ribosomal stalk which helps the ribosome interact with GTP-bound translation factors. Is thus essential for accurate translation. This is Large ribosomal subunit protein bL12 (rplL) from Salinivibrio costicola (Vibrio costicola).